Consider the following 189-residue polypeptide: Glucose-6-phosphate isomerase (189 aa).

Residues His88, His90, Glu97, and His136 each coordinate Fe cation.

It belongs to the archaeal-type GPI family. In terms of assembly, homodimer.

It localises to the cytoplasm. The enzyme catalyses alpha-D-glucose 6-phosphate = beta-D-fructose 6-phosphate. It participates in carbohydrate degradation; glycolysis; D-glyceraldehyde 3-phosphate and glycerone phosphate from D-glucose: step 2/4. The protein is Glucose-6-phosphate isomerase of Thermococcus onnurineus (strain NA1).